The sequence spans 396 residues: Glycerate kinase (396 aa).

It belongs to the glycerate kinase type-2 family.

Its subcellular location is the cytoplasm. The catalysed reaction is (R)-glycerate + ATP = (2R)-3-phosphoglycerate + ADP + H(+). The chain is Glycerate kinase (GLYCTK) from Macaca fascicularis (Crab-eating macaque).